A 334-amino-acid chain; its full sequence is L-lactate dehydrogenase B chain (334 aa).

Residue alanine 2 is modified to N-acetylalanine. Lysine 7 is subject to N6-acetyllysine. An NAD(+)-binding site is contributed by 31 to 53 (QVGMACAISILGKSLADELALVD). Position 44 is a phosphoserine (serine 44). Lysine 58 carries the N6-acetyllysine modification. Position 100 (arginine 100) interacts with NAD(+). Arginine 107 contributes to the substrate binding site. An N6-acetyllysine modification is found at lysine 119. Asparagine 139 contacts NAD(+). The substrate site is built by asparagine 139 and arginine 170. Histidine 194 (proton acceptor) is an active-site residue. Tyrosine 240 is subject to Phosphotyrosine. Threonine 249 serves as a coordination point for substrate. An N6-acetyllysine modification is found at lysine 329.

The protein belongs to the LDH/MDH superfamily. LDH family. In terms of assembly, homotetramer. Interacts with PTEN upstream reading frame protein MP31; the interaction leads to inhibition of mitochondrial lactate dehydrogenase activity, preventing conversion of lactate to pyruvate in mitochondria. Predominantly expressed in aerobic tissues such as cardiac muscle.

It localises to the cytoplasm. It is found in the mitochondrion inner membrane. The enzyme catalyses (S)-lactate + NAD(+) = pyruvate + NADH + H(+). It participates in fermentation; pyruvate fermentation to lactate; (S)-lactate from pyruvate: step 1/1. Interconverts simultaneously and stereospecifically pyruvate and lactate with concomitant interconversion of NADH and NAD(+). The polypeptide is L-lactate dehydrogenase B chain (LDHB) (Homo sapiens (Human)).